Reading from the N-terminus, the 327-residue chain is Undecaprenyl-phosphate 4-deoxy-4-formamido-L-arabinose transferase (327 aa).

Topologically, residues Met1–Leu235 are cytoplasmic. The helical transmembrane segment at Leu236–Val256 threads the bilayer. Residues Leu257–Gly269 are Periplasmic-facing. Residues Val270 to Leu290 traverse the membrane as a helical segment. The Cytoplasmic portion of the chain corresponds to Leu291–Gln327.

This sequence belongs to the glycosyltransferase 2 family.

The protein resides in the cell inner membrane. It carries out the reaction UDP-4-deoxy-4-formamido-beta-L-arabinose + di-trans,octa-cis-undecaprenyl phosphate = 4-deoxy-4-formamido-alpha-L-arabinopyranosyl di-trans,octa-cis-undecaprenyl phosphate + UDP. The protein operates within glycolipid biosynthesis; 4-amino-4-deoxy-alpha-L-arabinose undecaprenyl phosphate biosynthesis; 4-amino-4-deoxy-alpha-L-arabinose undecaprenyl phosphate from UDP-4-deoxy-4-formamido-beta-L-arabinose and undecaprenyl phosphate: step 1/2. It participates in bacterial outer membrane biogenesis; lipopolysaccharide biosynthesis. Its function is as follows. Catalyzes the transfer of 4-deoxy-4-formamido-L-arabinose from UDP to undecaprenyl phosphate. The modified arabinose is attached to lipid A and is required for resistance to polymyxin and cationic antimicrobial peptides. In Salmonella dublin (strain CT_02021853), this protein is Undecaprenyl-phosphate 4-deoxy-4-formamido-L-arabinose transferase.